Here is a 253-residue protein sequence, read N- to C-terminus: Ribosome maturation protein SBDS (253 aa).

Belongs to the SDO1/SBDS family. As to quaternary structure, associates with the 60S ribosomal subunit.

Its subcellular location is the cytoplasm. The protein localises to the nucleus. The protein resides in the nucleolus. It localises to the nucleoplasm. It is found in the cytoskeleton. Its subcellular location is the spindle. Its function is as follows. Required for the assembly of mature ribosomes and ribosome biogenesis. Together with K10C3.5b/EFL1, triggers the GTP-dependent release of ribosome maturation factors from 60S pre-ribosomes in the cytoplasm, thereby activating ribosomes for translation competence by allowing 80S ribosome assembly. Required for normal levels of protein synthesis. May play a role in cellular stress resistance. May play a role in cellular response to DNA damage. May play a role in cell proliferation. The polypeptide is Ribosome maturation protein SBDS (sbds-1) (Caenorhabditis elegans).